Reading from the N-terminus, the 124-residue chain is Large ribosomal subunit protein uL18 (124 aa).

It belongs to the universal ribosomal protein uL18 family. Part of the 50S ribosomal subunit; part of the 5S rRNA/L5/L18/L25 subcomplex. Contacts the 5S and 23S rRNAs.

Its function is as follows. This is one of the proteins that bind and probably mediate the attachment of the 5S RNA into the large ribosomal subunit, where it forms part of the central protuberance. This is Large ribosomal subunit protein uL18 from Desulfosudis oleivorans (strain DSM 6200 / JCM 39069 / Hxd3) (Desulfococcus oleovorans).